The sequence spans 98 residues: NADH-ubiquinone oxidoreductase chain 4L (98 aa).

3 consecutive transmembrane segments (helical) span residues methionine 1–methionine 21, leucine 30–threonine 50, and isoleucine 61–valine 81.

It belongs to the complex I subunit 4L family. In terms of assembly, core subunit of respiratory chain NADH dehydrogenase (Complex I) which is composed of 45 different subunits.

Its subcellular location is the mitochondrion inner membrane. It catalyses the reaction a ubiquinone + NADH + 5 H(+)(in) = a ubiquinol + NAD(+) + 4 H(+)(out). Functionally, core subunit of the mitochondrial membrane respiratory chain NADH dehydrogenase (Complex I) which catalyzes electron transfer from NADH through the respiratory chain, using ubiquinone as an electron acceptor. Part of the enzyme membrane arm which is embedded in the lipid bilayer and involved in proton translocation. The protein is NADH-ubiquinone oxidoreductase chain 4L (MT-ND4L) of Crocidura russula (Greater white-toothed shrew).